We begin with the raw amino-acid sequence, 78 residues long: Protein Vpr (78 aa).

The interval 1–42 (MEQAPEDQGPQREPHNEWTLELLEELKNEAVRHFPRIWLHGL) is homooligomerization.

This sequence belongs to the HIV-1 VPR protein family. As to quaternary structure, homooligomer, may form homodimer. Interacts with p6-gag region of the Pr55 Gag precursor protein through a (Leu-X-X)4 motif near the C-terminus of the P6gag protein. Interacts with host UNG. May interact with host RAD23A/HHR23A. Interacts with host VPRBP/DCAF1, leading to hijack the CUL4A-RBX1-DDB1-DCAF1/VPRBP complex, mediating ubiquitination of host proteins such as TERT and ZGPAT and arrest of the cell cycle in G2 phase. Phosphorylated on several residues by host. These phosphorylations regulate VPR activity for the nuclear import of the HIV-1 pre-integration complex.

It localises to the virion. The protein localises to the host nucleus. Its subcellular location is the host extracellular space. In terms of biological role, during virus replication, may deplete host UNG protein, and incude G2-M cell cycle arrest. Acts by targeting specific host proteins for degradation by the 26S proteasome, through association with the cellular CUL4A-DDB1 E3 ligase complex by direct interaction with host VPRPB/DCAF-1. Cell cycle arrest reportedly occurs within hours of infection and is not blocked by antiviral agents, suggesting that it is initiated by the VPR carried into the virion. Additionally, VPR induces apoptosis in a cell cycle dependent manner suggesting that these two effects are mechanistically linked. Detected in the serum and cerebrospinal fluid of AIDS patient, VPR may also induce cell death to bystander cells. Its function is as follows. During virus entry, plays a role in the transport of the viral pre-integration (PIC) complex to the host nucleus. This function is crucial for viral infection of non-dividing macrophages. May act directly at the nuclear pore complex, by binding nucleoporins phenylalanine-glycine (FG)-repeat regions. This is Protein Vpr from Human immunodeficiency virus type 1 group M subtype B (isolate PCV12) (HIV-1).